We begin with the raw amino-acid sequence, 225 residues long: Probable CDP-diacylglycerol--inositol 3-phosphatidyltransferase 2 (225 aa).

Transmembrane regions (helical) follow at residues 6 to 26 and 29 to 49; these read PATL…RVLL and IAFS…FFSF. Residues aspartate 52 and aspartate 55 each coordinate Mg(2+). The a CDP-1,2-diacyl-sn-glycerol site is built by glycine 56, arginine 60, and serine 66. Mg(2+)-binding residues include aspartate 73 and aspartate 77. Aspartate 77 (proton acceptor) is an active-site residue. 3 helical membrane passes run 84-104, 143-163, and 184-204; these read LLVI…LLAL, MFMG…LLIA, and LSLL…INVI.

Belongs to the CDP-alcohol phosphatidyltransferase class-I family. The cofactor is Mg(2+). Requires Mn(2+) as cofactor.

It is found in the membrane. It carries out the reaction a CDP-1,2-diacyl-sn-glycerol + myo-inositol = a 1,2-diacyl-sn-glycero-3-phospho-(1D-myo-inositol) + CMP + H(+). In terms of biological role, catalyzes the biosynthesis of phosphatidylinositol (PtdIns) as well as PtdIns:inositol exchange reaction. May thus act to reduce an excessive cellular PtdIns content. The exchange activity is due to the reverse reaction of PtdIns synthase and is dependent on CMP, which is tightly bound to the enzyme. The sequence is that of Probable CDP-diacylglycerol--inositol 3-phosphatidyltransferase 2 (PIS2) from Arabidopsis thaliana (Mouse-ear cress).